A 264-amino-acid polypeptide reads, in one-letter code: DNA-binding HTH-type transcriptional repressor TrmBL2 (264 aa).

Positions 81-113 (LEKFIEEWQERVKEELEAKKKAKEELIELMKPL) form a coiled coil.

It belongs to the transcriptional regulator TrmB family.

It is found in the cytoplasm. The protein resides in the chromosome. In terms of biological role, an abundant chromosomal protein that seems to be involved in both genome architecture and transcription repression. Incubation with DNA in vitro gives fibrous structures 14.2 +/- 2.1 nm in thickness (naked DNA is 1.83 +/- 0.37 nm); does not significantly compact DNA. Binds to both coding and non-coding regions; binding within gene promoters correlates with decreased transcript levels, while binding within coding regions does not. In Thermococcus kodakarensis (strain ATCC BAA-918 / JCM 12380 / KOD1) (Pyrococcus kodakaraensis (strain KOD1)), this protein is DNA-binding HTH-type transcriptional repressor TrmBL2.